Consider the following 670-residue polypeptide: MNASSWSLRNLPWFRATLAQWRYALRNTIAMCLALTVAYYLNLDEPYWAMTSAAVVSFPTVGGVISKSLGRIAGSLLGAIAALLLAGHTLNEPWFFLLSMSAWLGFCTWACAHFTNNVAYAFQLAGYTAAIIAFPMVNITEASQLWDIAQARVCEVIVGILCGGMMMMILPSSSDATALLTALKNMHARLLEHASLLWQPETTDAIRAAHEGVIGQILTMNLLRIQAFWSHYRFRQQNARLNALLHQQLRMTSVISSLRRMLLNWPSPPGATREILEQLLTALASSQTDVYTVARIIAPLRPTNVADYRHVAFWQRLRYFCRLYLQSSQELHRLQSGVDDHTRLPRTSGLARHTDNAEAMWSGLRTFCTLMMIGAWSIASQWDAGANALTLAAISCVLYSAVAAPFKSLSLLMRTLVLLSLFSFVVKFGLMVQISDLWQFLLFLFPLLATMQLLKLQMPKFAALWGQLIVFMGSFIAVTNPPVYDFADFLNDNLAKIVGVALAWLAFAILRPGSDARKSRRHIRALRRDFVDQLSRHPTLSESEFESLTYHHVSQLSNSQDALARRWLLRWGVVLLNCSHVVWQLRDWESRSDPLSRVRDNCISLLRGVMSERGVQQKSLAATLEELQRICDSLARHHQPAARELAAIVWRLYCSLSQLEQAPPQGTLAS.

10 helical membrane-spanning segments follow: residues 23–42 (YALR…YYLN), 47–69 (YWAM…SKSL), 76–98 (LLGA…FFLL), 118–140 (VAYA…VNIT), 153–170 (VCEV…MMIL), 381–403 (QWDA…SAVA), 410–432 (SLLM…GLMV), 437–454 (LWQF…MQLL), 461–483 (FAAL…NPPV), and 493–510 (NLAK…FAIL).

It belongs to the aromatic acid exporter ArAE (TC 2.A.85) family.

It localises to the cell membrane. This is an uncharacterized protein from Escherichia coli (strain K12).